A 702-amino-acid polypeptide reads, in one-letter code: Polyribonucleotide nucleotidyltransferase (702 aa).

Mg(2+) contacts are provided by Asp-485 and Asp-491. A KH domain is found at 552 to 612; that stretch reads PRTEIICIDP…EGVKKAISII (61 aa). An S1 motif domain is found at 622 to 690; it reads GEIYLGKVTK…NQGRINLSRK (69 aa).

This sequence belongs to the polyribonucleotide nucleotidyltransferase family. Mg(2+) serves as cofactor.

It is found in the cytoplasm. It catalyses the reaction RNA(n+1) + phosphate = RNA(n) + a ribonucleoside 5'-diphosphate. Involved in mRNA degradation. Catalyzes the phosphorolysis of single-stranded polyribonucleotides processively in the 3'- to 5'-direction. This chain is Polyribonucleotide nucleotidyltransferase, found in Clostridium botulinum (strain Langeland / NCTC 10281 / Type F).